The primary structure comprises 329 residues: Caveolae-associated protein 4a (329 aa).

Disordered regions lie at residues 198–260 and 274–329; these read SKEN…NIAK and KERT…IHED. Residues 198–262 are a coiled coil; it reads SKENMNKTRE…RLKENIAKKA (65 aa). Positions 201-220 are enriched in basic and acidic residues; the sequence is NMNKTREKTRENLSKTKESL. The span at 221–232 shows a compositional bias: polar residues; it reads SKTGQTLGTKFN. The span at 242-260 shows a compositional bias: basic and acidic residues; it reads EQREKIKQSSERLKENIAK. Positions 279–290 are enriched in low complexity; sequence AEGQEGAEAEPA. Position 292 is a phosphothreonine (Thr292). A compositionally biased stretch (basic and acidic residues) spans 310–329; sequence TENKREGPVSEEGATRIHED.

It belongs to the CAVIN family.

The protein resides in the cytoplasm. Its subcellular location is the myofibril. It localises to the sarcomere. It is found in the membrane. The protein localises to the caveola. Its function is as follows. Induces rhoa activation and activates nppa transcription and myofibrillar organization through the rho/rock signaling pathway. The protein is Caveolae-associated protein 4a (cavin4a) of Danio rerio (Zebrafish).